Reading from the N-terminus, the 133-residue chain is Holo-[acyl-carrier-protein] synthase (133 aa).

Residues Asp8 and Glu57 each contribute to the Mg(2+) site.

The protein belongs to the P-Pant transferase superfamily. AcpS family. The cofactor is Mg(2+).

The protein resides in the cytoplasm. The enzyme catalyses apo-[ACP] + CoA = holo-[ACP] + adenosine 3',5'-bisphosphate + H(+). In terms of biological role, transfers the 4'-phosphopantetheine moiety from coenzyme A to a Ser of acyl-carrier-protein. The polypeptide is Holo-[acyl-carrier-protein] synthase (Caulobacter sp. (strain K31)).